The primary structure comprises 416 residues: Serine hydroxymethyltransferase (416 aa).

(6S)-5,6,7,8-tetrahydrofolate-binding positions include Leu117 and Gly121–Leu123. Position 225 is an N6-(pyridoxal phosphate)lysine (Lys225). Residue Ser351–Phe353 coordinates (6S)-5,6,7,8-tetrahydrofolate.

This sequence belongs to the SHMT family. In terms of assembly, homodimer. Pyridoxal 5'-phosphate serves as cofactor.

It localises to the cytoplasm. It catalyses the reaction (6R)-5,10-methylene-5,6,7,8-tetrahydrofolate + glycine + H2O = (6S)-5,6,7,8-tetrahydrofolate + L-serine. The protein operates within one-carbon metabolism; tetrahydrofolate interconversion. It functions in the pathway amino-acid biosynthesis; glycine biosynthesis; glycine from L-serine: step 1/1. Functionally, catalyzes the reversible interconversion of serine and glycine with tetrahydrofolate (THF) serving as the one-carbon carrier. This reaction serves as the major source of one-carbon groups required for the biosynthesis of purines, thymidylate, methionine, and other important biomolecules. Also exhibits THF-independent aldolase activity toward beta-hydroxyamino acids, producing glycine and aldehydes, via a retro-aldol mechanism. The chain is Serine hydroxymethyltransferase from Blochmanniella pennsylvanica (strain BPEN).